A 230-amino-acid chain; its full sequence is Voltage-gated hydrogen channel 1 (230 aa).

The Cytoplasmic portion of the chain corresponds to Met1 to Lys58. The helical transmembrane segment at Phe59 to Leu79 threads the bilayer. Topologically, residues Leu80 to Ile96 are extracellular. A helical transmembrane segment spans residues Phe97–Phe119. Topologically, residues Arg120–Lys127 are cytoplasmic. The chain crosses the membrane as a helical span at residues Phe128 to Ser148. Over Arg149–Ala155 the chain is Extracellular. The helical transmembrane segment at Val156–Val176 threads the bilayer. At Ser177–Ser230 the chain is on the cytoplasmic side. Positions Val178–Asn225 form a coiled coil.

It belongs to the hydrogen channel family. As to quaternary structure, homodimer.

It is found in the membrane. Its subcellular location is the cell membrane. Functionally, mediates the voltage-dependent proton permeability of excitable membranes. Forms a proton-selective channel through which protons may pass in accordance with their electrochemical gradient. The chain is Voltage-gated hydrogen channel 1 (hvcn1) from Xenopus laevis (African clawed frog).